The chain runs to 227 residues: ATP synthase F(0) complex subunit a (227 aa).

Transmembrane regions (helical) follow at residues 14 to 34, 73 to 93, 98 to 118, 137 to 157, 179 to 199, and 203 to 223; these read FLGI…IPTP, LASL…PYIF, QLSL…LIGM, ALIP…PLAL, VFVL…LLLL, and LEVA…SLYL.

It belongs to the ATPase A chain family. As to quaternary structure, component of the ATP synthase complex composed at least of ATP5F1A/subunit alpha, ATP5F1B/subunit beta, ATP5MC1/subunit c (homooctomer), MT-ATP6/subunit a, MT-ATP8/subunit 8, ATP5ME/subunit e, ATP5MF/subunit f, ATP5MG/subunit g, ATP5MK/subunit k, ATP5MJ/subunit j, ATP5F1C/subunit gamma, ATP5F1D/subunit delta, ATP5F1E/subunit epsilon, ATP5PF/subunit F6, ATP5PB/subunit b, ATP5PD/subunit d, ATP5PO/subunit OSCP. ATP synthase complex consists of a soluble F(1) head domain (subunits alpha(3) and beta(3)) - the catalytic core - and a membrane F(0) domain - the membrane proton channel (subunits c, a, 8, e, f, g, k and j). These two domains are linked by a central stalk (subunits gamma, delta, and epsilon) rotating inside the F1 region and a stationary peripheral stalk (subunits F6, b, d, and OSCP). Interacts with DNAJC30; interaction is direct.

It localises to the mitochondrion inner membrane. The enzyme catalyses H(+)(in) = H(+)(out). In terms of biological role, subunit a, of the mitochondrial membrane ATP synthase complex (F(1)F(0) ATP synthase or Complex V) that produces ATP from ADP in the presence of a proton gradient across the membrane which is generated by electron transport complexes of the respiratory chain. ATP synthase complex consist of a soluble F(1) head domain - the catalytic core - and a membrane F(1) domain - the membrane proton channel. These two domains are linked by a central stalk rotating inside the F(1) region and a stationary peripheral stalk. During catalysis, ATP synthesis in the catalytic domain of F(1) is coupled via a rotary mechanism of the central stalk subunits to proton translocation. With the subunit c (ATP5MC1), forms the proton-conducting channel in the F(0) domain, that contains two crucial half-channels (inlet and outlet) that facilitate proton movement from the mitochondrial intermembrane space (IMS) into the matrix. Protons are taken up via the inlet half-channel and released through the outlet half-channel, following a Grotthuss mechanism. This is ATP synthase F(0) complex subunit a from Gadus morhua (Atlantic cod).